A 375-amino-acid polypeptide reads, in one-letter code: Hydrogenase-1 small chain (375 aa).

A signal peptide (tat-type signal) is located at residues 1-47 (MNTNNEETFYQAMRRKGVSRRSFLKYCSLAATSLGLGAAMTPRIAWA). Positions 64, 67, 162, 196, 234, 237, 262, and 268 each coordinate [4Fe-4S] cluster. 3 residues coordinate [3Fe-4S] cluster: Cys277, Cys296, and Cys299. The interval 353-375 (HNRHKQQLADAGQQSPDNEDKQA) is disordered.

Belongs to the [NiFe]/[NiFeSe] hydrogenase small subunit family. In terms of assembly, heterodimer of a large and a small subunit. [4Fe-4S] cluster serves as cofactor. It depends on [3Fe-4S] cluster as a cofactor. In terms of processing, predicted to be exported by the Tat system. The position of the signal peptide cleavage has not been experimentally proven.

It localises to the cell membrane. The enzyme catalyses H2 + A = AH2. This chain is Hydrogenase-1 small chain (hyaA), found in Citrobacter freundii.